The following is a 239-amino-acid chain: Aldehyde dehydrogenase, dimeric NADP-preferring (239 aa).

Cys-30 is an active-site residue.

It belongs to the aldehyde dehydrogenase family. Homodimer.

The protein localises to the cytoplasm. The catalysed reaction is an aldehyde + NAD(+) + H2O = a carboxylate + NADH + 2 H(+). It catalyses the reaction octanal + NAD(+) + H2O = octanoate + NADH + 2 H(+). Functionally, ALDHs play a major role in the detoxification of alcohol-derived acetaldehyde. They are involved in the metabolism of corticosteroids, biogenic amines, neurotransmitters, and lipid peroxidation. Oxidizes medium and long chain aldehydes into non-toxic fatty acids. Preferentially oxidizes aromatic aldehyde substrates. Comprises about 50 percent of corneal epithelial soluble proteins. May play a role in preventing corneal damage caused by ultraviolet light. The polypeptide is Aldehyde dehydrogenase, dimeric NADP-preferring (ALDH3A1) (Bos taurus (Bovine)).